A 738-amino-acid polypeptide reads, in one-letter code: 1,4-alpha-glucan branching enzyme GlgB (738 aa).

Asp-399 acts as the Nucleophile in catalysis. Glu-452 functions as the Proton donor in the catalytic mechanism.

Belongs to the glycosyl hydrolase 13 family. GlgB subfamily. In terms of assembly, monomer.

The enzyme catalyses Transfers a segment of a (1-&gt;4)-alpha-D-glucan chain to a primary hydroxy group in a similar glucan chain.. The protein operates within glycan biosynthesis; glycogen biosynthesis. In terms of biological role, catalyzes the formation of the alpha-1,6-glucosidic linkages in glycogen by scission of a 1,4-alpha-linked oligosaccharide from growing alpha-1,4-glucan chains and the subsequent attachment of the oligosaccharide to the alpha-1,6 position. In Chlamydia trachomatis serovar D (strain ATCC VR-885 / DSM 19411 / UW-3/Cx), this protein is 1,4-alpha-glucan branching enzyme GlgB.